The chain runs to 703 residues: Arylphorin subunit beta (703 aa).

Positions 1–16 (MKTVIILAGLVALALG) are cleaved as a signal peptide. 2 N-linked (GlcNAc...) asparagine glycosylation sites follow: N72 and N211.

This sequence belongs to the hemocyanin family. Arylphorin is a hexamer of subunits alpha and beta. Fat body.

The protein localises to the secreted. The protein resides in the extracellular space. In terms of biological role, arylphorin is a larval storage protein (LSP) which may serve as a storage protein used primarily as a source of aromatic amino acids for protein synthesis during metamorphosis. It is a constituent of the sclerotizing system of the cuticle, and serves as a carrier for ecdysteroid hormone. The polypeptide is Arylphorin subunit beta (Manduca sexta (Tobacco hawkmoth)).